Here is a 353-residue protein sequence, read N- to C-terminus: Photosystem II protein D1 (353 aa).

Position 2 is an N-acetylthreonine (threonine 2). The residue at position 2 (threonine 2) is a Phosphothreonine. Helical transmembrane passes span 29-46 (YIGW…TAIS), 118-133 (HFLL…EWEL), and 142-156 (WIAV…AATA). Histidine 118 serves as a coordination point for chlorophyll a. Tyrosine 126 is a binding site for pheophytin a. The [CaMn4O5] cluster site is built by aspartate 170 and glutamate 189. A helical transmembrane segment spans residues 197–218 (FHMLGVAGVFGGSLFSAMHGSL). Histidine 198 is a binding site for chlorophyll a. A quinone contacts are provided by residues histidine 215 and 264–265 (SF). Histidine 215 lines the Fe cation pocket. Residue histidine 272 participates in Fe cation binding. Residues 274 to 288 (FLAVWPVVGIWFTAM) form a helical membrane-spanning segment. [CaMn4O5] cluster contacts are provided by histidine 332, glutamate 333, aspartate 342, and alanine 344. A propeptide spanning residues 345–353 (SVEAPAVNG) is cleaved from the precursor.

It belongs to the reaction center PufL/M/PsbA/D family. PSII is composed of 1 copy each of membrane proteins PsbA, PsbB, PsbC, PsbD, PsbE, PsbF, PsbH, PsbI, PsbJ, PsbK, PsbL, PsbM, PsbT, PsbX, PsbY, PsbZ, Psb30/Ycf12, at least 3 peripheral proteins of the oxygen-evolving complex and a large number of cofactors. It forms dimeric complexes. The D1/D2 heterodimer binds P680, chlorophylls that are the primary electron donor of PSII, and subsequent electron acceptors. It shares a non-heme iron and each subunit binds pheophytin, quinone, additional chlorophylls, carotenoids and lipids. D1 provides most of the ligands for the Mn4-Ca-O5 cluster of the oxygen-evolving complex (OEC). There is also a Cl(-1) ion associated with D1 and D2, which is required for oxygen evolution. The PSII complex binds additional chlorophylls, carotenoids and specific lipids. is required as a cofactor. Tyr-161 forms a radical intermediate that is referred to as redox-active TyrZ, YZ or Y-Z. Post-translationally, C-terminally processed by CTPA; processing is essential to allow assembly of the oxygen-evolving complex and thus photosynthetic growth.

The protein localises to the plastid. It is found in the chloroplast thylakoid membrane. It catalyses the reaction 2 a plastoquinone + 4 hnu + 2 H2O = 2 a plastoquinol + O2. Photosystem II (PSII) is a light-driven water:plastoquinone oxidoreductase that uses light energy to abstract electrons from H(2)O, generating O(2) and a proton gradient subsequently used for ATP formation. It consists of a core antenna complex that captures photons, and an electron transfer chain that converts photonic excitation into a charge separation. The D1/D2 (PsbA/PsbD) reaction center heterodimer binds P680, the primary electron donor of PSII as well as several subsequent electron acceptors. In Mesostigma viride (Green alga), this protein is Photosystem II protein D1.